The following is a 956-amino-acid chain: Matrilin-2 (956 aa).

The first 23 residues, 1 to 23 (MEKMLVGCLLMLGQLFLVLPVDG), serve as a signal peptide directing secretion. One can recognise a VWFA 1 domain in the interval 57–232 (DLVFIIDSSR…SQIESLTSVF (176 aa)). Asn221 carries N-linked (GlcNAc...) asparagine glycosylation. 10 consecutive EGF-like domains span residues 238–278 (TVHM…KTCR), 279–319 (IQDL…KRCT), 320–360 (AVDY…KTCS), 361–401 (KIDY…KTCR), 402–442 (RINY…KTCS), 443–483 (RVDH…KTCS), 484–524 (RADY…KTCA), 525–565 (KLDS…KTCR), 566–606 (RKDV…KRCR), and 607–647 (RKNV…KHCK). Cystine bridges form between Cys242–Cys253, Cys249–Cys262, Cys264–Cys277, Cys283–Cys294, Cys290–Cys303, Cys305–Cys318, Cys324–Cys335, Cys331–Cys344, Cys346–Cys359, Cys365–Cys376, Cys372–Cys385, Cys387–Cys400, Cys406–Cys417, Cys413–Cys426, Cys428–Cys441, Cys447–Cys458, Cys454–Cys467, Cys469–Cys482, Cys488–Cys499, Cys495–Cys508, Cys510–Cys523, Cys529–Cys540, Cys536–Cys549, Cys551–Cys564, Cys570–Cys581, Cys577–Cys590, Cys592–Cys605, Cys611–Cys622, Cys618–Cys631, and Cys633–Cys646. The VWFA 2 domain maps to 655-830 (DLVFVIDGSK…STMGEISEKL (176 aa)). N-linked (GlcNAc...) asparagine glycosylation occurs at Asn890. Residues 917–955 (KCENLILFQNVANEEVRKLTQRLEEMTQRMEALENRLKY) adopt a coiled-coil conformation.

Detected in a variety of organs, including calvaria, uterus, heart and brain, as well as fibroblast and osteoblast cell lines.

The protein resides in the secreted. Its function is as follows. Involved in matrix assembly. This Mus musculus (Mouse) protein is Matrilin-2 (Matn2).